The chain runs to 403 residues: MHGFHDVFIQILLLLAISVTVIAIAKLLKEPDSVALVLVGLVLGLTQLPFIEEAESYITQSEVFQATVISLFLPILLGDATLKLPFHHLFSQKKTVMGLAFLGTFISSLTIGAASYFLLDLPLAVAFTFAALMSATDPISVLSIFKSLGVKQKMSTIMEGESLFNDGIAVVLFKIASIYLLTYIEMGWAGLGSGVFMFLKFAVGGALVGLILGYVFSQVIRVYDDYPLEVAFSALLFFGSYFIAEHFHTSGVIAVVVGGFVFGDYGAKIGMSEETKTNLNTFWDSVTLLANALIFLMVGLEIRNIDLAGNWGYIVGAIAIVLVGRTIAVYIGTGWIKELSSKERILINWGGLRGSLSIALALSLPMDFDGREQVLLLTFSVVLFSLIVQGLTLKPVIKKLGLA.

Helical transmembrane passes span 7–27, 34–54, 99–119, 125–145, 168–188, 196–216, 228–245, 250–272, 282–302, 311–331, 345–365, and 373–393; these read VFIQILLLLAISVTVIAIAKL, VALVLVGLVLGLTQLPFIEEA, LAFLGTFISSLTIGAASYFLL, VAFTFAALMSATDPISVLSIF, IAVVLFKIASIYLLTYIEMGW, FMFLKFAVGGALVGLILGYVF, LEVAFSALLFFGSYFIAE, SGVIAVVVGGFVFGDYGAKIGMS, FWDSVTLLANALIFLMVGLEI, WGYIVGAIAIVLVGRTIAVYI, ILINWGGLRGSLSIALALSLP, and QVLLLTFSVVLFSLIVQGLTL.

It belongs to the monovalent cation:proton antiporter 1 (CPA1) transporter (TC 2.A.36) family.

It localises to the cell membrane. In terms of biological role, na(+)/H(+) antiporter that extrudes sodium in exchange for external protons. Can also transport lithium. This Halobacillus aidingensis protein is Na(+)/H(+) antiporter NhaH (nhaH).